A 125-amino-acid chain; its full sequence is Holo-[acyl-carrier-protein] synthase (125 aa).

2 residues coordinate Mg(2+): Asp8 and Glu60.

It belongs to the P-Pant transferase superfamily. AcpS family. The cofactor is Mg(2+).

It is found in the cytoplasm. It carries out the reaction apo-[ACP] + CoA = holo-[ACP] + adenosine 3',5'-bisphosphate + H(+). Its function is as follows. Transfers the 4'-phosphopantetheine moiety from coenzyme A to a Ser of acyl-carrier-protein. In Wolbachia sp. subsp. Brugia malayi (strain TRS), this protein is Holo-[acyl-carrier-protein] synthase.